The chain runs to 139 residues: Nucleoside diphosphate kinase (139 aa).

Positions 10, 58, 86, 92, 104, and 114 each coordinate ATP. The Pros-phosphohistidine intermediate role is filled by His117.

This sequence belongs to the NDK family. As to quaternary structure, homotetramer. Mg(2+) serves as cofactor.

It localises to the cytoplasm. The enzyme catalyses a 2'-deoxyribonucleoside 5'-diphosphate + ATP = a 2'-deoxyribonucleoside 5'-triphosphate + ADP. It carries out the reaction a ribonucleoside 5'-diphosphate + ATP = a ribonucleoside 5'-triphosphate + ADP. Major role in the synthesis of nucleoside triphosphates other than ATP. The ATP gamma phosphate is transferred to the NDP beta phosphate via a ping-pong mechanism, using a phosphorylated active-site intermediate. This is Nucleoside diphosphate kinase from Rhodococcus erythropolis (strain PR4 / NBRC 100887).